The primary structure comprises 73 residues: Large ribosomal subunit protein bL31 (73 aa).

Belongs to the bacterial ribosomal protein bL31 family. Type A subfamily. In terms of assembly, part of the 50S ribosomal subunit.

Its function is as follows. Binds the 23S rRNA. The sequence is that of Large ribosomal subunit protein bL31 from Cereibacter sphaeroides (strain ATCC 17025 / ATH 2.4.3) (Rhodobacter sphaeroides).